The chain runs to 901 residues: Aconitate hydratase A (901 aa).

[4Fe-4S] cluster is bound by residues Cys-443, Cys-509, and Cys-512.

Belongs to the aconitase/IPM isomerase family. Monomer. [4Fe-4S] cluster serves as cofactor.

The enzyme catalyses citrate = D-threo-isocitrate. It carries out the reaction (2S,3R)-3-hydroxybutane-1,2,3-tricarboxylate = 2-methyl-cis-aconitate + H2O. Its pathway is carbohydrate metabolism; tricarboxylic acid cycle; isocitrate from oxaloacetate: step 2/2. The protein operates within organic acid metabolism; propanoate degradation. In terms of biological role, involved in the catabolism of short chain fatty acids (SCFA) via the tricarboxylic acid (TCA)(acetyl degradation route) and probably the 2-methylcitrate cycle I (propionate degradation route). Catalyzes the reversible isomerization of citrate to isocitrate via cis-aconitate. Could catalyze the hydration of 2-methyl-cis-aconitate to yield (2R,3S)-2-methylisocitrate. The apo form of AcnA functions as a RNA-binding regulatory protein. This Staphylococcus aureus (strain COL) protein is Aconitate hydratase A (acnA).